Consider the following 215-residue polypeptide: MSAETANPVNQARSTIYQLLSSLFAKEVDHKTLHELTSTQAQAFWSQLAEEPNFKADVDVLVAELAKLNSDKALLELAADYCGLFLVGTNNSASPYASLYLTDTPVAKGDEPLLFGEQHQQMTQFLKQSQLQVQSEFPEPADHLAVILAYVAHIAMYTSNQQQLEFIRDNLTNWLATFVAKVAKVDTGKFYIALAQLTLAWVNSDLEWLTSESTS.

Belongs to the TorD/DmsD family. TorD subfamily.

The protein resides in the cytoplasm. In terms of biological role, involved in the biogenesis of TorA. Acts on TorA before the insertion of the molybdenum cofactor and, as a result, probably favors a conformation of the apoenzyme that is competent for acquiring the cofactor. The protein is Chaperone protein TorD of Shewanella piezotolerans (strain WP3 / JCM 13877).